The chain runs to 1616 residues: S-layer-related protein (1616 aa).

The N-terminal stretch at 1–30 is a signal peptide; sequence MKSLLRKWNGMMIIALVISLLTPAWGKASA. One can recognise a BIG2 domain in the interval 1115–1185; it reads VKALKLDRGT…GSGTVQATYE (71 aa). Disordered regions lie at residues 1191–1244, 1372–1455, 1523–1554, and 1585–1616; these read ARVS…DGRN, NKRN…GRAR, ARGR…REAG, and FAGG…ARPC. The segment covering 1199 to 1225 has biased composition (gly residues); sequence STGGGSDTGSGTGSGSGGGSAGGGGTA. Residues 1372-1387 show a composition bias toward basic residues; sequence NKRNRRLRKLRPKNRK. The span at 1406-1416 shows a compositional bias: low complexity; the sequence is PPECSASCPPA. The SLH domain occupies 1438–1502; the sequence is WSPPRSASPT…ALDPAPAAAD (65 aa). Over residues 1536–1554 the composition is skewed to basic and acidic residues; it reads RGADTRTDERDAHARREAG. A compositionally biased stretch (basic residues) spans 1594 to 1616; sequence GRTRGRTLRARPARLPVRKARPC.

It is found in the secreted. Its subcellular location is the cell wall. The protein resides in the S-layer. Functionally, the S-layer is a paracrystalline mono-layered assembly of proteins which coats the surface of bacteria. May play a role in the export of butirosin from the organism. In Niallia circulans (Bacillus circulans), this protein is S-layer-related protein (butB).